We begin with the raw amino-acid sequence, 353 residues long: Hydrazine synthase subunit gamma (353 aa).

The first 39 residues, 1 to 39 (MAREMRLGGKERMKTGVVKIGLVAALGVVGLISAGGVYA), serve as a signal peptide directing secretion. Heme c-binding residues include Cys102, Cys105, and His106. The Ca(2+) site is built by Asp118, Leu119, Glu122, Gly123, Ser126, Asn129, Leu139, and Pro141. Cys165, Cys225, Cys228, and His229 together coordinate heme c. Residues 209–353 (EAQKRGQKIF…QDLVEYLKAL (145 aa)) enclose the Cytochrome c domain. Residues Asp296, Ser306, Gly307, and Thr308 each coordinate Ca(2+). Position 332 (His332) interacts with heme c.

In terms of assembly, part of the hydrazine synthase complex that forms an elongated dimer of heterotrimers composed of one alpha, one beta and one gamma subunit. Heme c serves as cofactor.

It is found in the anammoxosome. The enzyme catalyses hydrazine + 3 Fe(III)-[cytochrome c] + H2O = nitric oxide + 3 Fe(II)-[cytochrome c] + NH4(+) + 2 H(+). It functions in the pathway nitrogen metabolism. Functionally, component of the hydrazine synthase complex that catalyzes the condensation of nitric oxide (NO) with ammonium to form hydrazine. The gamma subunit catalyzes the first half-reaction, i.e. the three-electron reduction of nitric oxide to hydroxylamine; it may obtain electrons from the triheme cytochrome c kuste2854. Is involved in anaerobic ammonium oxidation (anammox), a biological process in which nitrite is used as the electron acceptor in the conversion of ammonium to dinitrogen gas (N2) and water; this bacterial process has a major role in the Earth's nitrogen cycle and has been estimated to synthesize up to 50% of the dinitrogen gas emitted into our atmosphere from the oceans. This is Hydrazine synthase subunit gamma from Kuenenia stuttgartiensis.